Reading from the N-terminus, the 88-residue chain is Small ribosomal subunit protein eS21 (88 aa).

This sequence belongs to the eukaryotic ribosomal protein eS21 family. In terms of assembly, component of the 40S small ribosomal subunit.

It is found in the cytoplasm. The protein localises to the cytosol. Its subcellular location is the rough endoplasmic reticulum. In Caenorhabditis elegans, this protein is Small ribosomal subunit protein eS21 (rps-21).